Here is a 367-residue protein sequence, read N- to C-terminus: MSKLRVGLLFGGRSGEHEVSISSARAIASALSAGENASKYEILPFYIHKDGRWLAGEAPQQVLKSGAPLLESSNSSPADNNLVNSQQQTLERWQSPSQVAEVDVWFPILHGPNGEDGTIQGLLTLMQTPFVGSGVLGSALGMDKIAMKMAFEQAGLPQVKYKAVTRAQIWSNPCVFPKLCDEIEASLGYPCFVKPANLGSSVGISKVRSRQELEDALDNAANYDRRIIVEAGVVAREVECAVLGNDQPQASTVGEITFNSDFYDYETKYTAGKADLLIPAVIPDEISRQIQDMALQAFAAVDAAGLARVDFFYVEATGEVLINEINTLPGFTATSMYPQLWAYSGIPFPELVDKLVQLAIERHNPSH.

Residues 148-357 (KMAFEQAGLP…FPELVDKLVQ (210 aa)) enclose the ATP-grasp domain. 184–239 (EASLGYPCFVKPANLGSSVGISKVRSRQELEDALDNAANYDRRIIVEAGVVAREVE) provides a ligand contact to ATP. 3 residues coordinate Mg(2+): Asp-310, Glu-324, and Asn-326.

Belongs to the D-alanine--D-alanine ligase family. It depends on Mg(2+) as a cofactor. The cofactor is Mn(2+).

Its subcellular location is the cytoplasm. It catalyses the reaction 2 D-alanine + ATP = D-alanyl-D-alanine + ADP + phosphate + H(+). The protein operates within cell wall biogenesis; peptidoglycan biosynthesis. In terms of biological role, cell wall formation. The protein is D-alanine--D-alanine ligase of Trichormus variabilis (strain ATCC 29413 / PCC 7937) (Anabaena variabilis).